We begin with the raw amino-acid sequence, 142 residues long: ATP synthase epsilon chain (142 aa).

The protein belongs to the ATPase epsilon chain family. As to quaternary structure, F-type ATPases have 2 components, CF(1) - the catalytic core - and CF(0) - the membrane proton channel. CF(1) has five subunits: alpha(3), beta(3), gamma(1), delta(1), epsilon(1). CF(0) has three main subunits: a, b and c.

It is found in the cell membrane. Functionally, produces ATP from ADP in the presence of a proton gradient across the membrane. This Lactiplantibacillus plantarum (strain ATCC BAA-793 / NCIMB 8826 / WCFS1) (Lactobacillus plantarum) protein is ATP synthase epsilon chain.